The chain runs to 165 residues: MASGVQVADEVCRIFYDMKVRKCSTPEEVKKRKKAVIFCLSPDKKCIIVEEGKEILVGDVGVTVTDPFKHFVEMLPEKDCRYALYDASFETKESKKEELMFFLWAPEQAPLKSKMIYASSKDAIKKKFQGIKHECQANGPEDLNRACIAEKLGGSLVVAFEGSPV.

The residue at position 2 (Ala-2) is an N-acetylalanine. Residues 4 to 153 (GVQVADEVCR…NRACIAEKLG (150 aa)) enclose the ADF-H domain. A Nuclear localization signal motif is present at residues 30–34 (KKRKK).

The protein belongs to the actin-binding proteins ADF family.

In terms of biological role, actin-depolymerizing protein. Severs actin filaments (F-actin) and binds to actin monomers (G-actin). Acts in a pH-independent manner. This chain is Destrin (DSTN), found in Gallus gallus (Chicken).